Reading from the N-terminus, the 532-residue chain is Light-independent protochlorophyllide reductase subunit B (532 aa).

[4Fe-4S] cluster is bound at residue D36. D282 serves as the catalytic Proton donor. A substrate-binding site is contributed by 417-418 (GL).

The protein belongs to the ChlB/BchB/BchZ family. In terms of assembly, protochlorophyllide reductase is composed of three subunits; BchL, BchN and BchB. Forms a heterotetramer of two BchB and two BchN subunits. It depends on [4Fe-4S] cluster as a cofactor.

The catalysed reaction is chlorophyllide a + oxidized 2[4Fe-4S]-[ferredoxin] + 2 ADP + 2 phosphate = protochlorophyllide a + reduced 2[4Fe-4S]-[ferredoxin] + 2 ATP + 2 H2O. It functions in the pathway porphyrin-containing compound metabolism; bacteriochlorophyll biosynthesis (light-independent). Functionally, component of the dark-operative protochlorophyllide reductase (DPOR) that uses Mg-ATP and reduced ferredoxin to reduce ring D of protochlorophyllide (Pchlide) to form chlorophyllide a (Chlide). This reaction is light-independent. The NB-protein (BchN-BchB) is the catalytic component of the complex. The sequence is that of Light-independent protochlorophyllide reductase subunit B from Methylobacterium radiotolerans (strain ATCC 27329 / DSM 1819 / JCM 2831 / NBRC 15690 / NCIMB 10815 / 0-1).